A 150-amino-acid chain; its full sequence is Endoribonuclease YbeY (150 aa).

Zn(2+) contacts are provided by His-113, His-117, and His-123.

It belongs to the endoribonuclease YbeY family. The cofactor is Zn(2+).

It is found in the cytoplasm. Single strand-specific metallo-endoribonuclease involved in late-stage 70S ribosome quality control and in maturation of the 3' terminus of the 16S rRNA. The protein is Endoribonuclease YbeY of Syntrophotalea carbinolica (strain DSM 2380 / NBRC 103641 / GraBd1) (Pelobacter carbinolicus).